Consider the following 347-residue polypeptide: NADH-quinone oxidoreductase subunit H (347 aa).

Transmembrane regions (helical) follow at residues Ile-13–Val-33, Pro-50–Phe-70, Ala-82–Val-102, Val-115–Gly-135, Ile-161–Val-181, Phe-198–Leu-218, Cys-263–Leu-283, Val-286–Val-306, and Leu-321–Leu-341.

The protein belongs to the complex I subunit 1 family. As to quaternary structure, NDH-1 is composed of 14 different subunits. Subunits NuoA, H, J, K, L, M, N constitute the membrane sector of the complex.

Its subcellular location is the cell inner membrane. It carries out the reaction a quinone + NADH + 5 H(+)(in) = a quinol + NAD(+) + 4 H(+)(out). Functionally, NDH-1 shuttles electrons from NADH, via FMN and iron-sulfur (Fe-S) centers, to quinones in the respiratory chain. The immediate electron acceptor for the enzyme in this species is believed to be ubiquinone. Couples the redox reaction to proton translocation (for every two electrons transferred, four hydrogen ions are translocated across the cytoplasmic membrane), and thus conserves the redox energy in a proton gradient. This subunit may bind ubiquinone. The protein is NADH-quinone oxidoreductase subunit H of Rhizobium johnstonii (strain DSM 114642 / LMG 32736 / 3841) (Rhizobium leguminosarum bv. viciae).